Consider the following 288-residue polypeptide: Small ribosomal subunit protein uS3 (288 aa).

One can recognise a KH type-2 domain in the interval 38–106 (IRRMMSKGLE…QVQLNIIEVK (69 aa)). The disordered stretch occupies residues 209–288 (PGRETPAEAP…TQPAETQQEG (80 aa)). Residues 219–232 (SRPRRERGDRSERP) show a composition bias toward basic and acidic residues. The span at 249–264 (AGRAAATTIAQAAETP) shows a compositional bias: low complexity. Over residues 277-288 (AATQPAETQQEG) the composition is skewed to polar residues.

The protein belongs to the universal ribosomal protein uS3 family. In terms of assembly, part of the 30S ribosomal subunit. Forms a tight complex with proteins S10 and S14.

Binds the lower part of the 30S subunit head. Binds mRNA in the 70S ribosome, positioning it for translation. This is Small ribosomal subunit protein uS3 from Salinispora arenicola (strain CNS-205).